The sequence spans 281 residues: Ribonuclease HII (281 aa).

Residues 1 to 46 are disordered; that stretch reads MIRDTKQPIKVPAKPASRSGGKAKTVKPKTIKPKTSAKAAAAKPAS. Low complexity predominate over residues 33–46; the sequence is PKTSAKAAAAKPAS. Residues 73–261 enclose the RNase H type-2 domain; the sequence is WPIAGCDEAG…VAAAWQKIEG (189 aa). Positions 79, 80, and 170 each coordinate a divalent metal cation.

Belongs to the RNase HII family. Mn(2+) serves as cofactor. It depends on Mg(2+) as a cofactor.

The protein localises to the cytoplasm. The enzyme catalyses Endonucleolytic cleavage to 5'-phosphomonoester.. Endonuclease that specifically degrades the RNA of RNA-DNA hybrids. In Rhodopseudomonas palustris (strain TIE-1), this protein is Ribonuclease HII.